An 88-amino-acid chain; its full sequence is Alkene monooxygenase system, oxygenase component subunit gamma (88 aa).

The protein belongs to the TmoB/XamoB family. The alkene monooxygenase multicomponent enzyme system is composed of an electron transfer component and a monooxygenase component interacting with the effector protein XamoD. The electron transfer component is composed of a ferredoxin reductase (XamoF) and a ferredoxin (XamoC), and the monooxygenase component is formed by a heterohexamer (dimer of heterotrimers) of two alpha subunits (XamoA), two beta subunits (XamoE) and two gamma subunits (XamoB).

The protein localises to the cytoplasm. It catalyses the reaction propene + NADH + O2 + H(+) = 1,2-epoxypropane + NAD(+) + H2O. Inhibited by propyne. Component of the alkene monooxygenase multicomponent enzyme system which catalyzes the O2- and NADH-dependent epoxidation of short chain (C2 to C6) alkenes to their corresponding epoxides. Also able to catalyze the oxidation of a number of chlorinated alkenes, including trichloroethylene, cis- and trans-1,2-dichloroethylene, vinyl chloride, 1-chloropropylene, 1,3-dichloropropylene and 2,3-dichloropropylene. This Xanthobacter autotrophicus (strain ATCC BAA-1158 / Py2) protein is Alkene monooxygenase system, oxygenase component subunit gamma.